We begin with the raw amino-acid sequence, 311 residues long: MNKNPFIVCLMGPTASGKTDLAIALARKLPFEIISVDSAMVYRGLDIGTAKPNEEELQLTSHRLINICDPSFPYSAGQFYKDALSEIKTIEIRNRTPLLVGGTMLYFHILEQGFSDLPTADETVRKKIQEEAAQHGWAKIHERLNAIDPKSAARINPNDAQRIQRAFEVYETTGQPLSSYQSLKRFKALPYQFINLILAPENRSWLHQRIEKRFDQMLKNNFLEEVRQLYNRGDLNSDLPAIRTVGYRQVWKYLSGEYDYETMRHKAIAATRQLAKRQLTWLRRWPDAKWFNSEDKDLISQVVDYLKGIGM.

12 to 19 (GPTASGKT) lines the ATP pocket. 14–19 (TASGKT) lines the substrate pocket. Interaction with substrate tRNA stretches follow at residues 37–40 (DSAM) and 161–165 (QRIQR).

This sequence belongs to the IPP transferase family. In terms of assembly, monomer. The cofactor is Mg(2+).

The catalysed reaction is adenosine(37) in tRNA + dimethylallyl diphosphate = N(6)-dimethylallyladenosine(37) in tRNA + diphosphate. Catalyzes the transfer of a dimethylallyl group onto the adenine at position 37 in tRNAs that read codons beginning with uridine, leading to the formation of N6-(dimethylallyl)adenosine (i(6)A). This chain is tRNA dimethylallyltransferase, found in Coxiella burnetii (strain Dugway 5J108-111).